The following is a 193-amino-acid chain: Thymidine kinase (193 aa).

ATP-binding positions include 15–22 (GCMYSGKT) and 87–90 (DELH). The active-site Proton acceptor is Glu88. Zn(2+)-binding residues include Cys147, Cys150, Cys185, and Cys188.

Belongs to the thymidine kinase family. As to quaternary structure, homotetramer.

The protein resides in the cytoplasm. The catalysed reaction is thymidine + ATP = dTMP + ADP + H(+). This is Thymidine kinase from Chloroflexus aurantiacus (strain ATCC 29366 / DSM 635 / J-10-fl).